The primary structure comprises 117 residues: MTRIKRGYIARRRRKKISLFASSFRGAHSRLTRTITQQRIRALVSAHRDRDRKKRDFRRLWITRINAVIRGVGVSYSYSRLIHNLYKKQLLLNRKILAQIAISNRNCLYMISNEIRK.

This sequence belongs to the bacterial ribosomal protein bL20 family.

The protein localises to the plastid. Its subcellular location is the chloroplast. Its function is as follows. Binds directly to 23S ribosomal RNA and is necessary for the in vitro assembly process of the 50S ribosomal subunit. It is not involved in the protein synthesizing functions of that subunit. In Gossypium hirsutum (Upland cotton), this protein is Large ribosomal subunit protein bL20c.